A 344-amino-acid chain; its full sequence is Mitogen-activated protein kinase mpkC (344 aa).

The region spanning 19–298 (YANVQPVGLG…AETALQHPYL (280 aa)) is the Protein kinase domain. Residues 25–33 (VGLGAFGLV) and K48 each bind ATP. Residue D140 is the Proton acceptor of the active site. Position 170 is a phosphothreonine (T170). Residues 170–172 (TGY) carry the TXY motif. Y172 carries the post-translational modification Phosphotyrosine.

Belongs to the protein kinase superfamily. Ser/Thr protein kinase family. MAP kinase subfamily. HOG1 sub-subfamily. Mg(2+) is required as a cofactor. In terms of processing, dually phosphorylated on Thr-170 and Tyr-172, which activates the enzyme.

It carries out the reaction L-seryl-[protein] + ATP = O-phospho-L-seryl-[protein] + ADP + H(+). The catalysed reaction is L-threonyl-[protein] + ATP = O-phospho-L-threonyl-[protein] + ADP + H(+). Its activity is regulated as follows. Activated by tyrosine and threonine phosphorylation. In terms of biological role, mitogen-activated protein kinase required for growth on media where sorbitol or mannitol is the sole carbon source. The protein is Mitogen-activated protein kinase mpkC (mpkC) of Aspergillus oryzae (strain ATCC 42149 / RIB 40) (Yellow koji mold).